We begin with the raw amino-acid sequence, 193 residues long: Glycerol-3-phosphate acyltransferase (193 aa).

5 helical membrane passes run 4–24 (LALIMIIIAYLLGSISSAVLI), 56–76 (GLVLLCDILKGMLPVWGGYFL), 80–100 (PLLLGIIAIAACLGHMYPLFF), 116–136 (APIGLDLTGLLFGTWVVIVLI), and 152–174 (PLFTWLVKPQYTLPVAMLSCLIV).

The protein belongs to the PlsY family. Probably interacts with PlsX.

It localises to the cell inner membrane. It carries out the reaction an acyl phosphate + sn-glycerol 3-phosphate = a 1-acyl-sn-glycero-3-phosphate + phosphate. Its pathway is lipid metabolism; phospholipid metabolism. Catalyzes the transfer of an acyl group from acyl-phosphate (acyl-PO(4)) to glycerol-3-phosphate (G3P) to form lysophosphatidic acid (LPA). This enzyme utilizes acyl-phosphate as fatty acyl donor, but not acyl-CoA or acyl-ACP. In Aliivibrio salmonicida (strain LFI1238) (Vibrio salmonicida (strain LFI1238)), this protein is Glycerol-3-phosphate acyltransferase.